The sequence spans 147 residues: UPF0306 protein YhbP (147 aa).

This sequence belongs to the UPF0306 family.

This Salmonella arizonae (strain ATCC BAA-731 / CDC346-86 / RSK2980) protein is UPF0306 protein YhbP.